The following is a 99-amino-acid chain: UPF0213 protein YazA (99 aa).

A GIY-YIG domain is found at 4–79 (NNHFFYVVKC…KKLTRKKKEL (76 aa)).

The protein belongs to the UPF0213 family.

The sequence is that of UPF0213 protein YazA (yazA) from Bacillus subtilis (strain 168).